The primary structure comprises 655 residues: D-xylonate dehydratase YagF (655 aa).

It belongs to the IlvD/Edd family.

The enzyme catalyses D-xylonate = 2-dehydro-3-deoxy-D-arabinonate + H2O. Its function is as follows. Catalyzes the dehydration of D-xylonic acid to form 2-dehydro-3-deoxy-D-pentonate. The polypeptide is D-xylonate dehydratase YagF (yagF) (Escherichia coli (strain K12)).